The primary structure comprises 588 residues: Zeta-carotene desaturase, chloroplastic/chromoplastic (588 aa).

Belongs to the zeta carotene desaturase family. The cofactor is NAD(+). It depends on NADP(+) as a cofactor. FAD is required as a cofactor.

The protein resides in the plastid. It is found in the chloroplast. It localises to the chromoplast. The enzyme catalyses 9,9'-di-cis-zeta-carotene + 2 a quinone = 7,7',9,9'-tetra-cis-lycopene + 2 a quinol. It functions in the pathway carotenoid biosynthesis; lycopene biosynthesis. In terms of biological role, catalyzes the conversion of zeta-carotene to lycopene via the intermediary of neurosporene. It carries out two consecutive desaturations (introduction of double bonds) at positions C-7 and C-7'. The polypeptide is Zeta-carotene desaturase, chloroplastic/chromoplastic (ZDS) (Solanum lycopersicum (Tomato)).